The chain runs to 111 residues: MNAHKERLESNLLELLQEALASLNDSELNSLSVTKVECSKGKHHALVFVLSSDHKILSKLKKAEGLIRQFVLQASGWFKCPKLSFVLDDSLEKQLRLDAIFNEIAKGKDND.

The protein belongs to the RbfA family. As to quaternary structure, monomer. Binds 30S ribosomal subunits, but not 50S ribosomal subunits or 70S ribosomes.

The protein localises to the cytoplasm. Functionally, one of several proteins that assist in the late maturation steps of the functional core of the 30S ribosomal subunit. Associates with free 30S ribosomal subunits (but not with 30S subunits that are part of 70S ribosomes or polysomes). Required for efficient processing of 16S rRNA. May interact with the 5'-terminal helix region of 16S rRNA. This is Ribosome-binding factor A from Helicobacter pylori (strain J99 / ATCC 700824) (Campylobacter pylori J99).